Consider the following 105-residue polypeptide: Heat shock protein HspQ (105 aa).

The protein belongs to the HspQ family.

The protein resides in the cytoplasm. Functionally, involved in the degradation of certain denaturated proteins, including DnaA, during heat shock stress. The sequence is that of Heat shock protein HspQ from Sodalis glossinidius (strain morsitans).